The following is a 212-amino-acid chain: Octanoyltransferase (212 aa).

The BPL/LPL catalytic domain occupies 31–209 (AETQDEIWLV…HFANLLGYNI (179 aa)). Substrate-binding positions include 70–77 (RGGQITYH), 138–140 (SLG), and 151–153 (GLA). Cysteine 169 acts as the Acyl-thioester intermediate in catalysis.

This sequence belongs to the LipB family.

It localises to the cytoplasm. The catalysed reaction is octanoyl-[ACP] + L-lysyl-[protein] = N(6)-octanoyl-L-lysyl-[protein] + holo-[ACP] + H(+). The protein operates within protein modification; protein lipoylation via endogenous pathway; protein N(6)-(lipoyl)lysine from octanoyl-[acyl-carrier-protein]: step 1/2. Catalyzes the transfer of endogenously produced octanoic acid from octanoyl-acyl-carrier-protein onto the lipoyl domains of lipoate-dependent enzymes. Lipoyl-ACP can also act as a substrate although octanoyl-ACP is likely to be the physiological substrate. This chain is Octanoyltransferase, found in Haemophilus influenzae (strain ATCC 51907 / DSM 11121 / KW20 / Rd).